Here is a 184-residue protein sequence, read N- to C-terminus: Oligoribonuclease (184 aa).

Residues 9–172 (LIWIDLEMTG…DDIRESIEEL (164 aa)) enclose the Exonuclease domain. Tyrosine 130 is a catalytic residue.

Belongs to the oligoribonuclease family.

Its subcellular location is the cytoplasm. Its function is as follows. 3'-to-5' exoribonuclease specific for small oligoribonucleotides. This chain is Oligoribonuclease, found in Actinobacillus pleuropneumoniae serotype 5b (strain L20).